The primary structure comprises 280 residues: Pantothenate synthetase (280 aa).

ATP is bound at residue 30–37 (MGYLHEGH). H37 serves as the catalytic Proton donor. Q61 is a (R)-pantoate binding site. Q61 lines the beta-alanine pocket. 147-150 (GQKD) provides a ligand contact to ATP. Q153 contributes to the (R)-pantoate binding site. ATP-binding positions include V176 and 184-187 (MSSR).

This sequence belongs to the pantothenate synthetase family. As to quaternary structure, homodimer.

Its subcellular location is the cytoplasm. The catalysed reaction is (R)-pantoate + beta-alanine + ATP = (R)-pantothenate + AMP + diphosphate + H(+). It participates in cofactor biosynthesis; (R)-pantothenate biosynthesis; (R)-pantothenate from (R)-pantoate and beta-alanine: step 1/1. In terms of biological role, catalyzes the condensation of pantoate with beta-alanine in an ATP-dependent reaction via a pantoyl-adenylate intermediate. This chain is Pantothenate synthetase, found in Thermotoga petrophila (strain ATCC BAA-488 / DSM 13995 / JCM 10881 / RKU-1).